The chain runs to 293 residues: ATP synthase gamma chain (293 aa).

Belongs to the ATPase gamma chain family. F-type ATPases have 2 components, CF(1) - the catalytic core - and CF(0) - the membrane proton channel. CF(1) has five subunits: alpha(3), beta(3), gamma(1), delta(1), epsilon(1). CF(0) has three main subunits: a, b and c.

It localises to the cell membrane. In terms of biological role, produces ATP from ADP in the presence of a proton gradient across the membrane. The gamma chain is believed to be important in regulating ATPase activity and the flow of protons through the CF(0) complex. The chain is ATP synthase gamma chain from Streptococcus gordonii (strain Challis / ATCC 35105 / BCRC 15272 / CH1 / DL1 / V288).